Consider the following 145-residue polypeptide: Cytochrome c550 (145 aa).

The first 24 residues, 1–24 (MNKNNVLRGLLVLAGLSLSSLALA), serve as a signal peptide directing secretion. The Cytochrome c domain occupies 60 to 142 (LAVEIGASAY…AIRSYLESVH (83 aa)). Residues cysteine 73, cysteine 76, histidine 77, and methionine 119 each coordinate heme c.

As to quaternary structure, monomer. Interacts with the quinoprotein ethanol dehydrogenase (QEDH) ExaA. Post-translationally, binds 1 heme group per subunit.

Its subcellular location is the periplasm. It participates in alcohol metabolism; ethanol degradation; acetate from ethanol. Its function is as follows. Is an essential component of the ethanol oxidation system that allows P.aeruginosa to grow on ethanol as the sole carbon and energy source. Is the direct electron acceptor of the quinoprotein ethanol dehydrogenase (QEDH). In Pseudomonas aeruginosa (strain ATCC 15692 / DSM 22644 / CIP 104116 / JCM 14847 / LMG 12228 / 1C / PRS 101 / PAO1), this protein is Cytochrome c550.